Reading from the N-terminus, the 343-residue chain is Phenylalanine--tRNA ligase alpha subunit (343 aa).

E268 lines the Mg(2+) pocket.

It belongs to the class-II aminoacyl-tRNA synthetase family. Phe-tRNA synthetase alpha subunit type 1 subfamily. Tetramer of two alpha and two beta subunits. Mg(2+) is required as a cofactor.

Its subcellular location is the cytoplasm. The catalysed reaction is tRNA(Phe) + L-phenylalanine + ATP = L-phenylalanyl-tRNA(Phe) + AMP + diphosphate + H(+). This Cupriavidus taiwanensis (strain DSM 17343 / BCRC 17206 / CCUG 44338 / CIP 107171 / LMG 19424 / R1) (Ralstonia taiwanensis (strain LMG 19424)) protein is Phenylalanine--tRNA ligase alpha subunit.